A 294-amino-acid chain; its full sequence is uncharacterized protein (294 aa).

A signal peptide spans Met-1–Ala-16. Residues Asn-25 and Asn-162 are each glycosylated (N-linked (GlcNAc...) asparagine; by host).

This is an uncharacterized protein from Acheta domesticus (House cricket).